Reading from the N-terminus, the 1120-residue chain is DNA-directed RNA polymerase subunit beta (1120 aa).

Belongs to the RNA polymerase beta chain family. As to quaternary structure, in plastids the minimal PEP RNA polymerase catalytic core is composed of four subunits: alpha, beta, beta', and beta''. When a (nuclear-encoded) sigma factor is associated with the core the holoenzyme is formed, which can initiate transcription.

It localises to the plastid. It is found in the chloroplast. It carries out the reaction RNA(n) + a ribonucleoside 5'-triphosphate = RNA(n+1) + diphosphate. Functionally, DNA-dependent RNA polymerase catalyzes the transcription of DNA into RNA using the four ribonucleoside triphosphates as substrates. This Gracilaria tenuistipitata var. liui (Red alga) protein is DNA-directed RNA polymerase subunit beta.